Consider the following 555-residue polypeptide: Lysine--tRNA ligase (555 aa).

A 'HIGH' region motif is present at residues Thr-37–Asn-45. A 'KMSKS' region motif is present at residues Ala-301–Ser-305.

Belongs to the class-I aminoacyl-tRNA synthetase family.

It is found in the cytoplasm. The catalysed reaction is tRNA(Lys) + L-lysine + ATP = L-lysyl-tRNA(Lys) + AMP + diphosphate. This is Lysine--tRNA ligase from Methanopyrus kandleri (strain AV19 / DSM 6324 / JCM 9639 / NBRC 100938).